A 949-amino-acid chain; its full sequence is Glycine dehydrogenase (decarboxylating) (949 aa).

An N6-(pyridoxal phosphate)lysine modification is found at lysine 704.

It belongs to the GcvP family. The glycine cleavage system is composed of four proteins: P, T, L and H. Requires pyridoxal 5'-phosphate as cofactor.

It carries out the reaction N(6)-[(R)-lipoyl]-L-lysyl-[glycine-cleavage complex H protein] + glycine + H(+) = N(6)-[(R)-S(8)-aminomethyldihydrolipoyl]-L-lysyl-[glycine-cleavage complex H protein] + CO2. Its function is as follows. The glycine cleavage system catalyzes the degradation of glycine. The P protein binds the alpha-amino group of glycine through its pyridoxal phosphate cofactor; CO(2) is released and the remaining methylamine moiety is then transferred to the lipoamide cofactor of the H protein. This is Glycine dehydrogenase (decarboxylating) from Bacteroides fragilis (strain ATCC 25285 / DSM 2151 / CCUG 4856 / JCM 11019 / LMG 10263 / NCTC 9343 / Onslow / VPI 2553 / EN-2).